An 81-amino-acid chain; its full sequence is MSALFCDATHELDAIGLRCPEPVMMVRKKVRLMAQGETLLVSADDPSTTRDIPSFCRFMDHTLVASETEQAPYRYLIRKGQ.

The active-site Cysteine persulfide intermediate is the Cys19.

This sequence belongs to the sulfur carrier protein TusA family.

It localises to the cytoplasm. Functionally, sulfur carrier protein which probably makes part of a sulfur-relay system. The polypeptide is Sulfur carrier protein TusA (Aeromonas salmonicida (strain A449)).